We begin with the raw amino-acid sequence, 440 residues long: Beta-1,3-galactosyl-O-glycosyl-glycoprotein beta-1,6-N-acetylglucosaminyltransferase 3 (440 aa).

The Cytoplasmic portion of the chain corresponds to 1–12 (MKMTGWKKKLCR). The helical; Signal-anchor for type II membrane protein transmembrane segment at 13-30 (GHHLWALGCYMLLAVVAL) threads the bilayer. Residues 31–440 (RLSLRLKCDV…RHKAIYGTEL (410 aa)) are Lumenal-facing. Cystine bridges form between Cys73-Cys230, Cys164-Cys384, Cys185-Cys212, and Cys393-Cys425. The N-linked (GlcNAc...) asparagine glycan is linked to Asn108.

It belongs to the glycosyltransferase 14 family. In terms of processing, N-glycosylated.

Its subcellular location is the golgi apparatus membrane. It carries out the reaction a 3-O-[beta-D-galactosyl-(1-&gt;3)-N-acetyl-alpha-D-galactosaminyl]-L-seryl-[protein] + UDP-N-acetyl-alpha-D-glucosamine = 3-O-{beta-D-galactosyl-(1-&gt;3)-[N-acetyl-beta-D-glucosaminyl-(1-&gt;6)]-N-acetyl-alpha-D-galactosaminyl}-L-seryl-[protein] + UDP + H(+). It catalyses the reaction a 3-O-[beta-D-galactosyl-(1-&gt;3)-N-acetyl-alpha-D-galactosaminyl]-L-threonyl-[protein] + UDP-N-acetyl-alpha-D-glucosamine = a 3-O-{beta-D-galactosyl-(1-&gt;3)-[N-acetyl-beta-D-glucosaminyl-(1-&gt;6)]-N-acetyl-alpha-D-galactosaminyl}-L-threonyl-[protein] + UDP + H(+). The enzyme catalyses a beta-D-Gal-(1-&gt;4)-beta-D-GlcNAc-(1-&gt;3)-beta-D-Gal-(1-&gt;4)-beta-D-GlcNAc derivative + UDP-N-acetyl-alpha-D-glucosamine = a beta-D-Gal-(1-&gt;4)-beta-D-GlcNAc-(1-&gt;3)-[beta-D-GlcNAc-(1-&gt;6)]-beta-D-Gal-(1-&gt;4)-N-acetyl-beta-D-glucosaminyl derivative + UDP + H(+). The catalysed reaction is 3-O-[N-acetyl-beta-D-glucosaminyl-(1-&gt;3)-N-acetyl-alpha-D-galactosaminyl]-L-seryl-[protein] + UDP-N-acetyl-alpha-D-glucosamine = 3-O-[N-acetyl-beta-D-glucosaminyl-(1-&gt;3)-[N-acetyl-beta-D-glucosaminyl-(1-&gt;6)]-N-acetyl-alpha-D-galactosaminyl]-L-seryl-[protein] + UDP + H(+). It carries out the reaction a 3-O-[N-acetyl-beta-D-glucosaminyl-(1-&gt;3)-N-acetyl-alpha-D-galactosaminyl]-L-threonyl-[protein] + UDP-N-acetyl-alpha-D-glucosamine = 3-O-[N-acetyl-beta-D-glucosaminyl-(1-&gt;3)-[N-acetyl-beta-D-glucosaminyl-(1-&gt;6)]-N-acetyl-alpha-D-galactosaminyl]-L-threonyl-[protein] + UDP + H(+). Its pathway is protein modification; protein glycosylation. Its function is as follows. Glycosyltransferase that can synthesize all known mucin beta 6 N-acetylglucosaminides. Mediates core 2 and core 4 O-glycan branching, 2 important steps in mucin-type biosynthesis. Also has I-branching enzyme activity by converting linear into branched poly-N-acetyllactosaminoglycans, leading to introduce the blood group I antigen during embryonic development. In Ovis aries (Sheep), this protein is Beta-1,3-galactosyl-O-glycosyl-glycoprotein beta-1,6-N-acetylglucosaminyltransferase 3 (GCNT3).